A 629-amino-acid chain; its full sequence is Embryonic polyadenylate-binding protein B (629 aa).

4 RRM domains span residues 11–89 (ASLY…WSQR), 99–175 (GNVF…HFKS), 191–268 (TNVY…RAQK), and 294–370 (VNLY…LAQR). Positions 539–616 (QEPLTASLLA…AVAVLQAHQA (78 aa)) constitute a PABC domain.

This sequence belongs to the polyadenylate-binding protein type-1 family. As to quaternary structure, interacts with dazl in an RNA-independent manner. The C-terminus can self-associate and also interact with the C-terminus of pabpc1, independently of RNA. RRM 1 and RRM 2 interact with both eif4g1 and paip1, and the C-terminus also interacts with paip1. Prior to oocyte maturation, found in a complex with dazl and pum2 proteins and spdy1 mRNA; pum2 dissociates from the complex during maturation. Interacts with the translation termination factor sup35/erf3.

Its subcellular location is the cytoplasm. Binds and protects the poly(A) tail of mRNA with or without an AU-rich element (ARE) and prevents mRNA deadenylation. Stimulates the translation of mRNAs to which it is bound during early development. This Xenopus laevis (African clawed frog) protein is Embryonic polyadenylate-binding protein B (epabp-b).